A 1172-amino-acid polypeptide reads, in one-letter code: Lysylphosphatidylglycerol biosynthesis bifunctional protein LysX (1172 aa).

Positions 1 to 34 are disordered; that stretch reads MGLHLTVPGLRRDGRGVQSNSHDTSSKTTADISR. Positions 1–663 are phosphatidylglycerol lysyltransferase; it reads MGLHLTVPGL…LLHHDGSAPD (663 aa). Over residues 17 to 31 the composition is skewed to polar residues; the sequence is VQSNSHDTSSKTTAD. 7 consecutive transmembrane segments (helical) span residues 80–100, 122–142, 146–166, 177–197, 214–234, 272–292, and 612–632; these read VPAA…LASV, FPDT…ALTA, IAWL…AAEI, FGEN…VLGY, AVWL…VELF, AIFG…LFLS, and VIPR…LPFS. The segment at 664–1172 is lysine--tRNA ligase; the sequence is VSGLRQVGLT…TLPFPLAKPH (509 aa). The segment at residues 726-804 is a DNA-binding region (OB); the sequence is VSVSGRIMRI…SLIVSGWRLI (79 aa). Positions 1084 and 1091 each coordinate Mg(2+).

In the N-terminal section; belongs to the LPG synthetase family. This sequence in the C-terminal section; belongs to the class-II aminoacyl-tRNA synthetase family. Mg(2+) serves as cofactor.

Its subcellular location is the cell membrane. The catalysed reaction is tRNA(Lys) + L-lysine + ATP = L-lysyl-tRNA(Lys) + AMP + diphosphate. It carries out the reaction L-lysyl-tRNA(Lys) + a 1,2-diacyl-sn-glycero-3-phospho-(1'-sn-glycerol) = a 1,2-diacyl-sn-glycero-3-phospho-1'-(3'-O-L-lysyl)-sn-glycerol + tRNA(Lys). Its function is as follows. Catalyzes the production of L-lysyl-tRNA(Lys)transfer and the transfer of a lysyl group from L-lysyl-tRNA(Lys) to membrane-bound phosphatidylglycerol (PG), which produces lysylphosphatidylglycerol (LPG), one of the components of the bacterial membrane with a positive net charge. LPG synthesis contributes to the resistance to cationic antimicrobial peptides (CAMPs) and likely protects M.tuberculosis against the CAMPs produced by competiting microorganisms (bacteriocins). In fact, the modification of anionic phosphatidylglycerol with positively charged L-lysine results in repulsion of the peptides. The sequence is that of Lysylphosphatidylglycerol biosynthesis bifunctional protein LysX (lysX) from Mycobacterium bovis (strain ATCC BAA-935 / AF2122/97).